Here is a 458-residue protein sequence, read N- to C-terminus: Adenylosuccinate synthetase (458 aa).

GTP is bound by residues glycine 17–lysine 23 and glycine 45–threonine 47. The Proton acceptor role is filled by aspartate 18. The Mg(2+) site is built by aspartate 18 and glycine 45. Residues aspartate 18–lysine 21, asparagine 43–histidine 46, threonine 137, arginine 151, glutamine 247, threonine 262, and arginine 330 each bind IMP. The active-site Proton donor is the histidine 46. Valine 326–arginine 332 provides a ligand contact to substrate. GTP is bound by residues arginine 332, lysine 358 to aspartate 360, and serine 440 to serine 442.

The protein belongs to the adenylosuccinate synthetase family. In terms of assembly, homodimer. Mg(2+) serves as cofactor.

The protein localises to the cytoplasm. The catalysed reaction is IMP + L-aspartate + GTP = N(6)-(1,2-dicarboxyethyl)-AMP + GDP + phosphate + 2 H(+). Its pathway is purine metabolism; AMP biosynthesis via de novo pathway; AMP from IMP: step 1/2. In terms of biological role, plays an important role in the de novo pathway of purine nucleotide biosynthesis. Catalyzes the first committed step in the biosynthesis of AMP from IMP. The protein is Adenylosuccinate synthetase of Verminephrobacter eiseniae (strain EF01-2).